Reading from the N-terminus, the 283-residue chain is Probable endonuclease 4 (283 aa).

Positions 69, 109, 145, 179, 182, 216, 229, 231, and 261 each coordinate Zn(2+).

This sequence belongs to the AP endonuclease 2 family. Requires Zn(2+) as cofactor.

It catalyses the reaction Endonucleolytic cleavage to 5'-phosphooligonucleotide end-products.. Its function is as follows. Endonuclease IV plays a role in DNA repair. It cleaves phosphodiester bonds at apurinic or apyrimidinic (AP) sites, generating a 3'-hydroxyl group and a 5'-terminal sugar phosphate. This is Probable endonuclease 4 from Prosthecochloris aestuarii (strain DSM 271 / SK 413).